We begin with the raw amino-acid sequence, 542 residues long: Homeobox and leucine zipper protein Homez (542 aa).

The homeobox 1 DNA-binding region spans 55–114 (WTQAIQTSELDGNEHLLQAFSYFPYPSLADIALLCLRHGLQMEKVKTWFMAQRLRCGISW). The interval 165–193 (LSPLAPSEQPTHMKGLKVEPEEPSQVSQL) is disordered. Glycyl lysine isopeptide (Lys-Gly) (interchain with G-Cter in SUMO2) cross-links involve residues K181 and K201. The tract at residues 250-307 (VHQPDKPASVSLLDNSCKEESEPSGIPPSSSTSSPSFQALANGTTATPKPLQPLGCIS) is disordered. Over residues 272 to 285 (PSGIPPSSSTSSPS) the composition is skewed to low complexity. A compositionally biased stretch (polar residues) spans 286 to 296 (FQALANGTTAT). S345 is modified (phosphoserine). 2 consecutive DNA-binding regions (homeobox) follow at residues 349–409 (QHQR…KHGQ) and 443–502 (TPPL…AEVV). Positions 352–357 (RKTKRK) match the Nuclear localization signal motif. 2 disordered regions span residues 424–454 (FQDP…PPPD) and 501–542 (VVVC…IIWD). T443 carries the post-translational modification Phosphothreonine. Positions 444–454 (PPLPAPPPPPD) are enriched in pro residues. Positions 505–542 (LDEEDEEDEEDELPEDGEEEEEEEEDDDDGDDDVIIWD) are enriched in acidic residues.

In terms of assembly, homodimer or heterodimer (Potential). Interacts with HOXC8. As to expression, ubiquitous. Strongly expressed in testis.

It localises to the nucleus. May function as a transcriptional regulator. The polypeptide is Homeobox and leucine zipper protein Homez (Homez) (Mus musculus (Mouse)).